A 488-amino-acid chain; its full sequence is E3 ubiquitin-protein ligase RNF8 (488 aa).

Residues 38–92 (VTIGRGLSVTYQLISKVCPLMISRSHCVLKQNPEGQWTIMDNKSLNGVWLNRERL) form the FHA domain. The interval 68–72 (QNPEG) is required for interaction with PIWIL1. Residues 141 to 164 (DQRMEKHKGSRTKRKFSSPGLENL) are disordered. A compositionally biased stretch (basic residues) spans 145-156 (EKHKGSRTKRKF). Ser157 carries the phosphoserine modification. Residues 406–444 (CIICSEYFIEAVTLNCAHSFCSFCINEWMKRKVECPICR) form an RING-type zinc finger.

Belongs to the RNF8 family. As to quaternary structure, homodimer. Forms a E2-E3 ubiquitin ligase complex composed of the RNF8 homodimer and a E2 heterodimer of UBE2N and UBE2V2. Interacts with class III E2s, including UBE2E1, UBE2E2, and UBE2E3 and with UBE2N. Interacts with RXRA. Interacts (via FHA domain) with ATM-phosphorylated MDC1. Interacts (via FHA domain) with 'Thr-4829' phosphorylated HERC2 (via C-terminus). Interacts with PIWIL1; leading to sequester RNF8 in the cytoplasm. Interacts with WRAP53/TCAB1. In terms of assembly, (Microbial infection) May interact with the L.monocytogenes protein actA; however, given these errors in the sequence (AJ242721), the relevance of the interaction with actA remains to be confirmed. Post-translationally, autoubiquitinated through 'Lys-48' and 'Lys-63' of ubiquitin. 'Lys-63' polyubiquitination is mediated by UBE2N. 'Lys-29'-type polyubiquitination is also observed, but it doesn't require its own functional RING-type zinc finger.

The protein resides in the nucleus. Its subcellular location is the cytoplasm. It localises to the midbody. The protein localises to the chromosome. It is found in the telomere. The enzyme catalyses S-ubiquitinyl-[E2 ubiquitin-conjugating enzyme]-L-cysteine + [acceptor protein]-L-lysine = [E2 ubiquitin-conjugating enzyme]-L-cysteine + N(6)-ubiquitinyl-[acceptor protein]-L-lysine.. Its pathway is protein modification; protein ubiquitination. E3 ubiquitin-protein ligase that plays a key role in DNA damage signaling via 2 distinct roles: by mediating the 'Lys-63'-linked ubiquitination of histones H2A and H2AX and promoting the recruitment of DNA repair proteins at double-strand breaks (DSBs) sites, and by catalyzing 'Lys-48'-linked ubiquitination to remove target proteins from DNA damage sites. Following DNA DSBs, it is recruited to the sites of damage by ATM-phosphorylated MDC1 and catalyzes the 'Lys-63'-linked ubiquitination of histones H2A and H2AX, thereby promoting the formation of TP53BP1 and BRCA1 ionizing radiation-induced foci (IRIF). Also controls the recruitment of UIMC1-BRCC3 (RAP80-BRCC36) and PAXIP1/PTIP to DNA damage sites. Promotes the recruitment of NBN to DNA damage sites by catalyzing 'Lys-6'-linked ubiquitination of NBN. Also recruited at DNA interstrand cross-links (ICLs) sites and catalyzes 'Lys-63'-linked ubiquitination of histones H2A and H2AX, leading to recruitment of FAAP20 and Fanconi anemia (FA) complex, followed by interstrand cross-link repair. H2A ubiquitination also mediates the ATM-dependent transcriptional silencing at regions flanking DSBs in cis, a mechanism to avoid collision between transcription and repair intermediates. Promotes the formation of 'Lys-63'-linked polyubiquitin chains via interactions with the specific ubiquitin-conjugating UBE2N/UBC13 and ubiquitinates non-histone substrates such as PCNA. Substrates that are polyubiquitinated at 'Lys-63' are usually not targeted for degradation. Also catalyzes the formation of 'Lys-48'-linked polyubiquitin chains via interaction with the ubiquitin-conjugating UBE2L6/UBCH8, leading to degradation of substrate proteins such as CHEK2, JMJD2A/KDM4A and KU80/XRCC5: it is still unclear how the preference toward 'Lys-48'- versus 'Lys-63'-linked ubiquitination is regulated but it could be due to RNF8 ability to interact with specific E2 specific ligases. For instance, interaction with phosphorylated HERC2 promotes the association between RNF8 and UBE2N/UBC13 and favors the specific formation of 'Lys-63'-linked ubiquitin chains. Promotes non-homologous end joining (NHEJ) by promoting the 'Lys-48'-linked ubiquitination and degradation the of KU80/XRCC5. Following DNA damage, mediates the ubiquitination and degradation of JMJD2A/KDM4A in collaboration with RNF168, leading to unmask H4K20me2 mark and promote the recruitment of TP53BP1 at DNA damage sites. Following DNA damage, mediates the ubiquitination and degradation of POLD4/p12, a subunit of DNA polymerase delta. In the absence of POLD4, DNA polymerase delta complex exhibits higher proofreading activity. In addition to its function in damage signaling, also plays a role in higher-order chromatin structure by mediating extensive chromatin decondensation. Involved in the activation of ATM by promoting histone H2B ubiquitination, which indirectly triggers histone H4 'Lys-16' acetylation (H4K16ac), establishing a chromatin environment that promotes efficient activation of ATM kinase. Required in the testis, where it plays a role in the replacement of histones during spermatogenesis. At uncapped telomeres, promotes the joining of deprotected chromosome ends by inducing H2A ubiquitination and TP53BP1 recruitment, suggesting that it may enhance cancer development by aggravating telomere-induced genome instability in case of telomeric crisis. Promotes the assembly of RAD51 at DNA DSBs in the absence of BRCA1 and TP53BP1 Also involved in class switch recombination in immune system, via its role in regulation of DSBs repair. May be required for proper exit from mitosis after spindle checkpoint activation and may regulate cytokinesis. May play a role in the regulation of RXRA-mediated transcriptional activity. Not involved in RXRA ubiquitination by UBE2E2. The chain is E3 ubiquitin-protein ligase RNF8 from Mus musculus (Mouse).